We begin with the raw amino-acid sequence, 464 residues long: NADH dehydrogenase [ubiquinone] flavoprotein 1, mitochondrial (464 aa).

A mitochondrion-targeting transit peptide spans 1–20; that stretch reads MLAARRLLGWSLPARVSVRF. Residue lysine 81 is modified to N6-acetyllysine; alternate. The residue at position 81 (lysine 81) is an N6-succinyllysine; alternate. An NADH-binding site is contributed by 87-96; sequence GRGGAGFPTG. Lysine 104 bears the N6-acetyllysine mark. Position 199 to 247 (199 to 247) interacts with FMN; it reads RGAGAYICGEETALIESIEGKQGKPRLKPPFPADVGVFGCPTTVANVET. Arginine 257 carries the post-translational modification Omega-N-methylarginine. Residue lysine 375 is modified to N6-acetyllysine. [4Fe-4S] cluster-binding residues include cysteine 379, cysteine 382, cysteine 385, and cysteine 425.

It belongs to the complex I 51 kDa subunit family. As to quaternary structure, core subunit of respiratory chain NADH dehydrogenase (Complex I) which is composed of 45 different subunits. This is a component of the flavoprotein-sulfur (FP) fragment of the enzyme. Interacts with RAB5IF. Requires FMN as cofactor. The cofactor is [4Fe-4S] cluster.

The protein resides in the mitochondrion inner membrane. It catalyses the reaction a ubiquinone + NADH + 5 H(+)(in) = a ubiquinol + NAD(+) + 4 H(+)(out). Core subunit of the mitochondrial membrane respiratory chain NADH dehydrogenase (Complex I) which catalyzes electron transfer from NADH through the respiratory chain, using ubiquinone as an electron acceptor. Part of the peripheral arm of the enzyme, where the electrons from NADH are accepted by flavin mononucleotide (FMN) and then passed along a chain of iron-sulfur clusters by electron tunnelling to the final acceptor ubiquinone. Contains FMN, which is the initial electron acceptor as well as one iron-sulfur cluster. The polypeptide is NADH dehydrogenase [ubiquinone] flavoprotein 1, mitochondrial (Pongo pygmaeus (Bornean orangutan)).